We begin with the raw amino-acid sequence, 218 residues long: Capsid protein (218 aa).

Residue M1 is modified to N-acetylmethionine; by host. The segment at 1-28 (MDKSESTSVGRNRRRRPRRGSRSAPSSA) is disordered. The segment covering 11–21 (RNRRRRPRRGS) has biased composition (basic residues).

The protein belongs to the cucumovirus capsid protein family.

It localises to the virion. In terms of biological role, capsid protein. Probably binds RNA and plays a role in packaging. The sequence is that of Capsid protein from Cucumber mosaic virus (strain E5) (CMV).